The following is a 264-amino-acid chain: NADH-quinone oxidoreductase subunit B 1 (264 aa).

Residues cysteine 42, cysteine 43, cysteine 108, and cysteine 138 each contribute to the [4Fe-4S] cluster site.

The protein belongs to the complex I 20 kDa subunit family. NDH-1 is composed of 14 different subunits. Subunits NuoB, C, D, E, F, and G constitute the peripheral sector of the complex. The cofactor is [4Fe-4S] cluster.

The protein resides in the cell membrane. It catalyses the reaction a quinone + NADH + 5 H(+)(in) = a quinol + NAD(+) + 4 H(+)(out). Its function is as follows. NDH-1 shuttles electrons from NADH, via FMN and iron-sulfur (Fe-S) centers, to quinones in the respiratory chain. The immediate electron acceptor for the enzyme in this species is believed to be ubiquinone. Couples the redox reaction to proton translocation (for every two electrons transferred, four hydrogen ions are translocated across the cytoplasmic membrane), and thus conserves the redox energy in a proton gradient. The polypeptide is NADH-quinone oxidoreductase subunit B 1 (Chloroflexus aurantiacus (strain ATCC 29366 / DSM 635 / J-10-fl)).